The following is a 263-amino-acid chain: 7beta-hydroxysteroid dehydrogenase (263 aa).

NADP(+) contacts are provided by residues 17–21 (TEGVG), 40–41 (RR), and 66–67 (DF). Tyr-156 serves as the catalytic Proton acceptor. Ser-240 contributes to the NADP(+) binding site.

It belongs to the short-chain dehydrogenases/reductases (SDR) family.

The catalysed reaction is a 7beta-hydroxysteroid + NADP(+) = a 7-oxosteroid + NADPH + H(+). It carries out the reaction 7-oxolithocholate + NADPH + H(+) = ursodeoxycholate + NADP(+). Functionally, 7beta-hydroxysteroid dehydrogenase that catalyzes the reduction of the 7-oxo group of 7-oxo-lithocholate (7-oxo-LCA), to yield ursodeoxycholate (UDCA). As R.gnavus is a common core bacterium of the human gut microbiota, this enzyme contributes to the formation of UDCA in the human colon. UDCA is regarded as a chemopreventive beneficial secondary bile acid due to its low hydrophobicity; it protects hepatocytes and bile duct epithelial cells against necrosis and apoptosis induced by more hydrophobic secondary bile acids like deoxycholate (DCA). This enzyme is also able to catalyze the reverse reaction in vitro, i.e. the oxidation of the 7beta-hydroxy group of UDCA to 7-oxo-LCA, but much less efficiently than the reduction reaction. The sequence is that of 7beta-hydroxysteroid dehydrogenase from Mediterraneibacter gnavus (strain ATCC 29149 / DSM 114966 / JCM 6515 / VPI C7-9) (Ruminococcus gnavus).